We begin with the raw amino-acid sequence, 344 residues long: DNA integrity scanning protein DisA (344 aa).

The region spanning 1–133 (MALLAPGTPI…GRRYLIERPE (133 aa)) is the DAC domain. ATP-binding positions include G61 and 92 to 96 (TRHRT).

Belongs to the DisA family. As to quaternary structure, homooctamer. Mg(2+) serves as cofactor.

It carries out the reaction 2 ATP = 3',3'-c-di-AMP + 2 diphosphate. In terms of biological role, participates in a DNA-damage check-point. DisA forms globular foci that rapidly scan along the chromosomes searching for lesions. Functionally, also has diadenylate cyclase activity, catalyzing the condensation of 2 ATP molecules into cyclic di-AMP (c-di-AMP). c-di-AMP likely acts as a signaling molecule that may couple DNA integrity with a cellular process. The sequence is that of DNA integrity scanning protein DisA from Cutibacterium acnes (strain DSM 16379 / KPA171202) (Propionibacterium acnes).